A 2175-amino-acid chain; its full sequence is Non-reducing polyketide synthase PKS1 (2175 aa).

An N-terminal acylcarrier protein transacylase domain (SAT) region spans residues 5 to 242; that stretch reads LLFGDQTAEQ…VSIPIYGPYH (238 aa). The 433-residue stretch at 369–801 folds into the Ketosynthase family 3 (KS3) domain; sequence TDKIAIVGMA…GGNTALLIED (433 aa). Active-site for beta-ketoacyl synthase activity residues include Cys541, His676, and His719. Residues 900 to 1212 form a malonyl-CoA:ACP transacylase (MAT) domain region; that stretch reads FCFTGQGSQY…ISTSICHLFT (313 aa). Catalysis depends on Ser988, which acts as the For acyl/malonyl transferase activity. The interval 1285-1604 is product template (PT) domain; the sequence is STSCQNVISE…RKVLNVFLPP (320 aa). The segment at 1289-1424 is N-terminal hotdog fold; the sequence is QNVISEEFDG…CTIRYEDKAV (136 aa). Residues 1289–1599 enclose the PKS/mFAS DH domain; that stretch reads QNVISEEFDG…FQQIPRKVLN (311 aa). The active-site Proton acceptor; for dehydratase activity is the His1321. Residues 1452–1599 form a C-terminal hotdog fold region; that stretch reads AHKVQRGMAY…FQQIPRKVLN (148 aa). Residue Asp1512 is the Proton donor; for dehydratase activity of the active site. The tract at residues 1640 to 1664 is disordered; it reads PVRKSAGPAKAAAAPSMPKPSKVAA. A compositionally biased stretch (low complexity) spans 1643-1664; sequence KSAGPAKAAAAPSMPKPSKVAA. Residues 1666–1743 enclose the Carrier 1 domain; it reads KPAGSMVDKV…EMKKYFSQFN (78 aa). The residue at position 1703 (Ser1703) is an O-(pantetheine 4'-phosphoryl)serine. Residues 1766–1804 form a disordered region; it reads ATPFDEMSTPASSAPSVPQSDAGKPSPDSPTGDSLSDDV. Polar residues predominate over residues 1774–1784; the sequence is TPASSAPSVPQ. A Carrier 2 domain is found at 1801-1878; sequence SDDVGDVSIA…DIENALGMRP (78 aa). Ser1838 carries the O-(pantetheine 4'-phosphoryl)serine modification. Residues 1879–1899 are disordered; that stretch reads KPKAVGPKLSKPSTKTDMNEV. Residues 1889-1899 are compositionally biased toward polar residues; sequence KPSTKTDMNEV. A claisen cyclase domain region spans residues 1932-2158; sequence KVFFLPDGSG…GHHFSMMKDP (227 aa). Ser2002 serves as the catalytic For Claisen cyclase activity.

It depends on pantetheine 4'-phosphate as a cofactor.

It carries out the reaction 6 malonyl-CoA + acetyl-CoA + 6 H(+) = naphtopyrone YWA1 + 6 CO2 + 7 CoA + H2O. Its pathway is pigment biosynthesis; melanin biosynthesis. In terms of biological role, non-reducing polyketide synthase; part of the gene cluster 29 that mediates the biosynthesis of mediates the biosynthesis of dihydroxynaphthalene (DHN)-melanin, a bluish-green pigment and a structural component of the conidial wall. The first step of the pathway is the production of the heptaketide naphtopyrone YWA1 by the polyketide synthase PKS1 though condensation of acetyl-CoA with malonyl-CoA. The sequence is that of Non-reducing polyketide synthase PKS1 from Zymoseptoria tritici (strain CBS 115943 / IPO323) (Speckled leaf blotch fungus).